The chain runs to 165 residues: uncharacterized protein (165 aa).

A compositionally biased stretch (polar residues) spans 22-34 (QQANQENMSSRTD). The disordered stretch occupies residues 22–45 (QQANQENMSSRTDSPIPPFGESEQ).

This is an uncharacterized protein from Homo sapiens (Human).